Reading from the N-terminus, the 112-residue chain is Nucleoid-associated protein FTN_1196 (112 aa).

A disordered region spans residues 1–27 (MNFDMSKLMQQAQKMQEQMKKAQQERE). The segment covering 17 to 27 (EQMKKAQQERE) has biased composition (basic and acidic residues).

Belongs to the YbaB/EbfC family. In terms of assembly, homodimer.

Its subcellular location is the cytoplasm. It localises to the nucleoid. Functionally, binds to DNA and alters its conformation. May be involved in regulation of gene expression, nucleoid organization and DNA protection. This chain is Nucleoid-associated protein FTN_1196, found in Francisella tularensis subsp. novicida (strain U112).